The primary structure comprises 250 residues: MTALLSPDQLEADLRAIGARLYHDQHPFHALLHHGKLDRGQVQAWALNRFEYQRCIPLKDAAILARMEDPALRRIWRQRILDHDGNSASDGGIARWLHLTDALGLDRTLVESGRALLPGTRFAVQAYLHFVREKSLLEAIASSLTELFAPNIIGQRVAGMLKHYDFVSSEALAYFEHRLTEAPRDSDFALDYVKQHADTVEKQALVKAALHFKCSVLWAQLDALHVAYVTPGIVWPDAFVPDRDASRVAA.

The protein belongs to the PqqC family.

The catalysed reaction is 6-(2-amino-2-carboxyethyl)-7,8-dioxo-1,2,3,4,7,8-hexahydroquinoline-2,4-dicarboxylate + 3 O2 = pyrroloquinoline quinone + 2 H2O2 + 2 H2O + H(+). The protein operates within cofactor biosynthesis; pyrroloquinoline quinone biosynthesis. Ring cyclization and eight-electron oxidation of 3a-(2-amino-2-carboxyethyl)-4,5-dioxo-4,5,6,7,8,9-hexahydroquinoline-7,9-dicarboxylic-acid to PQQ. This is Pyrroloquinoline-quinone synthase from Xanthomonas euvesicatoria pv. vesicatoria (strain 85-10) (Xanthomonas campestris pv. vesicatoria).